Consider the following 701-residue polypeptide: Larval serum protein 2 (701 aa).

The first 21 residues, 1-21 (MKSFTVIALAAVALLATLGQA), serve as a signal peptide directing secretion. An N-linked (GlcNAc...) asparagine glycan is attached at N204.

It belongs to the hemocyanin family. As to quaternary structure, homohexamer.

The protein localises to the secreted. Its subcellular location is the extracellular space. Larval storage protein (LSP) which may serve as a store of amino acids for synthesis of adult proteins. In Drosophila melanogaster (Fruit fly), this protein is Larval serum protein 2 (Lsp2).